The following is a 389-amino-acid chain: 1-deoxy-D-xylulose 5-phosphate reductoisomerase (389 aa).

Ser11, Gly12, Ser13, Val14, Asn39, and Asn122 together coordinate NADPH. Position 123 (Lys123) interacts with 1-deoxy-D-xylulose 5-phosphate. NADPH is bound at residue Glu124. Asp148 serves as a coordination point for Mn(2+). 1-deoxy-D-xylulose 5-phosphate is bound by residues Ser149, Glu150, Ser174, and His197. Glu150 is a Mn(2+) binding site. Gly203 provides a ligand contact to NADPH. 1-deoxy-D-xylulose 5-phosphate contacts are provided by Ser210, Asn215, Lys216, and Glu219. Glu219 serves as a coordination point for Mn(2+).

The protein belongs to the DXR family. Requires Mg(2+) as cofactor. The cofactor is Mn(2+).

It catalyses the reaction 2-C-methyl-D-erythritol 4-phosphate + NADP(+) = 1-deoxy-D-xylulose 5-phosphate + NADPH + H(+). The protein operates within isoprenoid biosynthesis; isopentenyl diphosphate biosynthesis via DXP pathway; isopentenyl diphosphate from 1-deoxy-D-xylulose 5-phosphate: step 1/6. Its function is as follows. Catalyzes the NADPH-dependent rearrangement and reduction of 1-deoxy-D-xylulose-5-phosphate (DXP) to 2-C-methyl-D-erythritol 4-phosphate (MEP). In Leptospira interrogans serogroup Icterohaemorrhagiae serovar copenhageni (strain Fiocruz L1-130), this protein is 1-deoxy-D-xylulose 5-phosphate reductoisomerase.